The following is a 277-amino-acid chain: Large ribosomal subunit protein uL2 (277 aa).

The tract at residues Ser-211 to Lys-277 is disordered.

The protein belongs to the universal ribosomal protein uL2 family. As to quaternary structure, part of the 50S ribosomal subunit. Forms a bridge to the 30S subunit in the 70S ribosome.

In terms of biological role, one of the primary rRNA binding proteins. Required for association of the 30S and 50S subunits to form the 70S ribosome, for tRNA binding and peptide bond formation. It has been suggested to have peptidyltransferase activity; this is somewhat controversial. Makes several contacts with the 16S rRNA in the 70S ribosome. This Staphylococcus epidermidis (strain ATCC 35984 / DSM 28319 / BCRC 17069 / CCUG 31568 / BM 3577 / RP62A) protein is Large ribosomal subunit protein uL2.